The chain runs to 438 residues: uncharacterized protein (438 aa).

This is an uncharacterized protein from Acanthamoeba polyphaga mimivirus (APMV).